A 195-amino-acid polypeptide reads, in one-letter code: Cysteine/O-acetylserine efflux protein (195 aa).

Over 1 to 9 (MTPMLLSAF) the chain is Periplasmic. A helical membrane pass occupies residues 10-32 (WTYTLITALTPGPNNILALSAAT). Residues 33–46 (AHGFRQSIRVLAGM) lie on the Cytoplasmic side of the membrane. The helical transmembrane segment at 47 to 67 (SLGFLVVMLLCAGIAFSLAVI) threads the bilayer. Residues 68 to 69 (DP) lie on the Periplasmic side of the membrane. The chain crosses the membrane as a helical span at residues 70 to 90 (AIIHLLSWVGAAYILWLAWKI). Residues 91 to 104 (ATSPAADENARPKP) are Cytoplasmic-facing. Residues 105 to 125 (VGFWVSFGLQFVNVKIILYGI) traverse the membrane as a helical segment. The Periplasmic portion of the chain corresponds to 126 to 141 (TALSTFVLPQTQALNW). The chain crosses the membrane as a helical span at residues 142-162 (VIGVSILLALIGTFGNVCWAL). Residues 163-176 (AGHLFQRAFRHYGR) lie on the Cytoplasmic side of the membrane. Residues 177–194 (QLNIILALLLVYCAVRIF) form a helical membrane-spanning segment. Position 195 (tyrosine 195) is a topological domain, periplasmic.

It belongs to the Rht family.

It is found in the cell inner membrane. The enzyme catalyses O-acetyl-L-serine(in) = O-acetyl-L-serine(out). It carries out the reaction L-cysteine(in) = L-cysteine(out). Exporter of O-acetylserine (OAS) and cysteine. This Salmonella choleraesuis (strain SC-B67) protein is Cysteine/O-acetylserine efflux protein (eamB).